Consider the following 257-residue polypeptide: Phosphatidylglycerol--prolipoprotein diacylglyceryl transferase (257 aa).

Transmembrane regions (helical) follow at residues 12–32, 49–69, 83–103, and 109–129; these read FSIR…VYLA, FILM…VIFE, IWNG…LLVI, and LINP…AQAI. Arg-131 is an a 1,2-diacyl-sn-glycero-3-phospho-(1'-sn-glycerol) binding site. The next 3 membrane-spanning stretches (helical) occupy residues 167-187, 197-217, and 226-246; these read VPTF…IMSI, GEVA…IEGM, and GLRV…VMII.

This sequence belongs to the Lgt family.

It localises to the cell membrane. The catalysed reaction is L-cysteinyl-[prolipoprotein] + a 1,2-diacyl-sn-glycero-3-phospho-(1'-sn-glycerol) = an S-1,2-diacyl-sn-glyceryl-L-cysteinyl-[prolipoprotein] + sn-glycerol 1-phosphate + H(+). The protein operates within protein modification; lipoprotein biosynthesis (diacylglyceryl transfer). In terms of biological role, catalyzes the transfer of the diacylglyceryl group from phosphatidylglycerol to the sulfhydryl group of the N-terminal cysteine of a prolipoprotein, the first step in the formation of mature lipoproteins. The sequence is that of Phosphatidylglycerol--prolipoprotein diacylglyceryl transferase from Streptococcus agalactiae serotype Ia (strain ATCC 27591 / A909 / CDC SS700).